A 289-amino-acid polypeptide reads, in one-letter code: Splicing factor C9orf78 homolog (289 aa).

Residues 1–12 (MPVVRKIFRRRR) show a composition bias toward basic residues. 2 disordered regions span residues 1-27 (MPVVRKIFRRRRGDSESEEDEQDSEEV) and 86-109 (GKDKISEEEDLHLGTSFSAETNRR). Residues 5–58 (RKIFRRRRGDSESEEDEQDSEEVRLKLEETREVQNLRKRPNGVSAVALLVGEKV) are interaction with SNRNP200. Serine 15 and serine 17 each carry phosphoserine. Residue tyrosine 147 is modified to Phosphotyrosine. Positions 232-283 (LNAPIRRNKEEPKARPLRVGDTEKPEPERSPPNRKRPANEKATDDYHYEKFK) are enriched in basic and acidic residues. Positions 232–289 (LNAPIRRNKEEPKARPLRVGDTEKPEPERSPPNRKRPANEKATDDYHYEKFKKMNRRY) are disordered. Threonine 253 is modified (phosphothreonine). A Phosphoserine modification is found at serine 261.

Belongs to the TLS1 family. As to quaternary structure, component of the spliceosome. Interacts with SNRNP200; the interaction is direct. Interacts with PRPF8.

Its subcellular location is the nucleus. The protein resides in the chromosome. It is found in the centromere. Plays a role in pre-mRNA splicing by promoting usage of the upstream 3'-splice site at alternative NAGNAG splice sites; these are sites featuring alternative acceptor motifs separated by only a few nucleotides. May also modulate exon inclusion events. Plays a role in spliceosomal remodeling by displacing WBP4 from SNRNP200 and may act to inhibit SNRNP200 helicase activity. Binds U5 snRNA. Required for proper chromosome segregation. Not required for splicing of shelterin components. The polypeptide is Splicing factor C9orf78 homolog (Pongo abelii (Sumatran orangutan)).